The following is a 365-amino-acid chain: Isoflavone 4'-O-methyltransferase (365 aa).

S-adenosyl-L-methionine contacts are provided by residues 207 to 210 (VAGG), D231, 231 to 232 (DQ), 251 to 252 (DM), and K265. The active-site Proton acceptor is the H269.

It belongs to the class I-like SAM-binding methyltransferase superfamily. Cation-independent O-methyltransferase family. COMT subfamily.

The enzyme catalyses a 4'-hydroxyisoflavone + S-adenosyl-L-methionine = a 4'-methoxyisoflavone + S-adenosyl-L-homocysteine + H(+). The catalysed reaction is (2R,3S)-2,4',7-trihydroxyisoflavanone + S-adenosyl-L-methionine = (2R,3S)-2,7-dihydroxy-4'-methoxyisoflavanone + S-adenosyl-L-homocysteine + H(+). In terms of biological role, 2-hydroxyisoflavanone 4'-O-methyltransferase involved in the biosynthesis of formononetin. Can use 2,7,4'-trihydroxyisoflavanone as substrate, but not daidzein. The protein is Isoflavone 4'-O-methyltransferase (HI4'OMT) of Lotus japonicus (Lotus corniculatus var. japonicus).